The sequence spans 283 residues: MRQYLDLCQRIVNEGCWIENKRTGKRCLTVINADLTYDVANNRFPIITTRKSYWKAAIAEFLGYIRGYDNAADFRKLGAKTWDANANENQVWLNNPHRKGTDDMGRVYGVQGRAWRKPNGETVDQLRKIVNNLSRGIDDRGEILTFLNPGEFDLGCLRPCMYNHTFSLLGDTLYLTSYQRSCDVPLGLNFNQIQVFTFLALMAQITGKKAGQAYHKIVNAHIYEDQLELMRDVQLKREPFPSPKLEINPDIKTLEDLETWVTMDDFNVVGYQCHEPIKYPFSV.

Residue arginine 22 participates in dUMP binding. Residue cysteine 160 is the Nucleophile of the active site. DUMP is bound by residues 180–183 (RSCD), asparagine 191, and 221–223 (HIY). (6R)-5,10-methylene-5,6,7,8-tetrahydrofolate is bound at residue aspartate 183. Serine 282 provides a ligand contact to (6R)-5,10-methylene-5,6,7,8-tetrahydrofolate.

Belongs to the thymidylate synthase family. Bacterial-type ThyA subfamily. Homodimer.

It localises to the cytoplasm. It carries out the reaction dUMP + (6R)-5,10-methylene-5,6,7,8-tetrahydrofolate = 7,8-dihydrofolate + dTMP. It participates in pyrimidine metabolism; dTTP biosynthesis. Functionally, catalyzes the reductive methylation of 2'-deoxyuridine-5'-monophosphate (dUMP) to 2'-deoxythymidine-5'-monophosphate (dTMP) while utilizing 5,10-methylenetetrahydrofolate (mTHF) as the methyl donor and reductant in the reaction, yielding dihydrofolate (DHF) as a by-product. This enzymatic reaction provides an intracellular de novo source of dTMP, an essential precursor for DNA biosynthesis. This chain is Thymidylate synthase, found in Mannheimia succiniciproducens (strain KCTC 0769BP / MBEL55E).